An 833-amino-acid chain; its full sequence is Bifunctional dethiobiotin synthetase/7,8-diamino-pelargonic acid aminotransferase, mitochondrial (833 aa).

Residues 1 to 23 constitute a mitochondrion transit peptide; the sequence is MIPVTATLIRHRLRHLRHRIRFK. The tract at residues 36 to 299 is dethiobiotin synthetase; sequence HPTYLIWSAN…VLVLPPVPKD (264 aa). Residue 47-52 participates in ATP binding; that stretch reads SLGKTL. Thr-51 contributes to the Mg(2+) binding site. Residue Thr-81 participates in substrate binding. Asp-88 contacts Mg(2+). ATP-binding positions include Asp-97, 210–213, and 270–271; these read ETAG and ED. Glu-210 contacts Mg(2+). Residues 332–830 are 7,8-diamino-pelargonic acid aminotransferase; sequence RLNGMAKLAG…TKLYKRLGEF (499 aa). 391–392 serves as a coordination point for (8S)-8-amino-7-oxononanoate; that stretch reads WW. 453-454 provides a ligand contact to pyridoxal 5'-phosphate; it reads GS. Position 495 (Tyr-495) interacts with (8S)-8-amino-7-oxononanoate. ATP contacts are provided by residues 518-520 and Glu-545; that span reads PWY. Asp-637 contributes to the pyridoxal 5'-phosphate binding site. Residues Lys-666 and Gly-700 each coordinate (8S)-8-amino-7-oxononanoate. Lys-666 carries the post-translational modification N6-(pyridoxal phosphate)lysine. 701–702 serves as a coordination point for pyridoxal 5'-phosphate; the sequence is HS. Arg-797 provides a ligand contact to (8S)-8-amino-7-oxononanoate.

This sequence in the N-terminal section; belongs to the dethiobiotin synthetase family. It in the C-terminal section; belongs to the class-III pyridoxal-phosphate-dependent aminotransferase family. BioA subfamily. In terms of assembly, homodimer. The cofactor is Mg(2+). Requires pyridoxal 5'-phosphate as cofactor.

The protein resides in the mitochondrion matrix. The catalysed reaction is (7R,8S)-7,8-diammoniononanoate + CO2 + ATP = (4R,5S)-dethiobiotin + ADP + phosphate + 3 H(+). The enzyme catalyses (8S)-8-amino-7-oxononanoate + S-adenosyl-L-methionine = S-adenosyl-4-methylsulfanyl-2-oxobutanoate + (7R,8S)-7,8-diammoniononanoate. It participates in cofactor biosynthesis; biotin biosynthesis; biotin from 7,8-diaminononanoate: step 1/2. The protein operates within cofactor biosynthesis; biotin biosynthesis; 7,8-diaminononanoate from 8-amino-7-oxononanoate (SAM route): step 1/1. In terms of biological role, bifunctional enzyme that catalyzes two different reactions involved in the biotin biosynthesis. Functionally, catalyzes a mechanistically unusual reaction, the ATP-dependent insertion of CO2 between the N7 and N8 nitrogen atoms of 7,8-diaminopelargonic acid (DAPA) to form an ureido ring. Catalyzes the transfer of the alpha-amino group from S-adenosyl-L-methionine (SAM) to 7-keto-8-aminopelargonic acid (KAPA) to form 7,8-diaminopelargonic acid (DAPA). It is the only aminotransferase known to utilize SAM as an amino donor. The sequence is that of Bifunctional dethiobiotin synthetase/7,8-diamino-pelargonic acid aminotransferase, mitochondrial from Arabidopsis thaliana (Mouse-ear cress).